Here is a 1591-residue protein sequence, read N- to C-terminus: MEVHDGLKSPDKAAKSRYDDDRIDQDSEDEAVRLVANPDPSKPRKISERKRADQAAFESWVNDNKIRLSLPSATKSRRSGIRELFSSDETLETRPTRTRPRERVIEGPREYQIELFERAKQKNTIAVLDTGTGKTLIAILLIRHIIELELGARWQGREKRITFFLVDKVALVRQQTDHIRANLDFPVTGLHGDTVRNLWYSKEYFEKLLQEQEVVVCTAEILYRCLHRSYLNISQVSLVVFDEAHHAKKNHVYARIIKDFYLMEEDCQKRPRIFGMTASPIDTKDTCISYERATHELESLLHSEIATISDRDLLKVIGSRPQEVRKSYARVLRQENTELCNQLRELVGNHPLFKQTFDSAEFAVTELGAWCADKLWELCFREEAVSTLDGRVEGSRARDPDEVGESSHEVSNAREALSLVQQWSFSPPEDGSLSTKTHKLIEILAECFSQASAGNAIQCIVFVKRRDTAVLLNALCEQAEIRTKIPDLKGAFLIGAGRGGNAAFTTTRQQEQTVSRFRDGEINCLFATSIAEEGLDIPGCNVVIRFDLHGTTIQYIQSRGRARMRNSWFIHMTEFGNPEHNRRWFQDRVNEQKMRDFCLSLPKDRIMEKAEVDDVLRGDQSQKIFVVPGSKASLTFKQSLVVLAEFVATLPARPDEILSVDYTVVPVFGGFQGEVYLPASSPLRSAMGGVYRSKQLAKCAAAYAMCIQLYNSNYLDDHLKSTLAKVLPAMRNARLAVSSKKRKSYNMRTKPVLWSEVGPLTELYAMVLSLAQPGAAYYHSRPILLLTRKPLPEIAQFPLFFGKGSSRRSNVRCIPLAHPWSPTTTQVEGICAFTLCIFRDIFSKDFQASGTDMPYFLAPSTGIEHGTDLSSLVNPERIIDWATVHRTTTTDRVPYNFNEPDEFFQDKYVSDPFDGSRKFFMRKVRRDLKPQDKVPEGVPAPSKWRAVEHTILNYSVSLWKKSRAGHNSRQDQPVVEAELAPLRRNLLDETDGENSTGPQTCYLVLETLLISQIPVDTVVMAYTFPAIIYRLENSLISLEACQNLGLDIPIDIALIAMTKDSDNSDDHDEAPINFQSGMGQNYERLEFLGDCFLKMATSIALYTLVEGDEFEYHVERMLDICNKNLLNWALESNLQEHIRSKSFNRRTWYPPGLKLLKGKKTEVDDEHALGDKSIADVCEALIGAAYLTAQAQSSPNFDLAVKAVTVMTHSKTHTMQAWSDYYASYQCPEWLSTPPSQTQLELCSQIKNKMGYRFKNPRLLRCAFMHPSYPRQYENIPSYQRLEFLGDSLLDMVCVDYLFKKHPDKDPQWLTEHKMAMVSNQFFGCVAVGLGFHRHLIHMQPALGGSITEWAELVTKKREEARQLAVRRGQREEDYARDFWIEVHHPPKCLPDILEAYVGALFVDTGYDYSAVVGFFDRHIKPYFADMSIYDMYSSKHPVTHITSIITTQFGCSSFRLMVHEIPDDVQGEGLVTGAVKVVAACMIHGEVRCHAVAASGRYAKLAVAKQAVAIYEDMSPTEFRLRHGCNCKPEDGDGDHGVLVDHRADCEPEEPLRKQDPPAKSVVDVDGKTIAEMRLRHSKQMNDQEECLSW.

Composition is skewed to basic and acidic residues over residues 1–20 and 41–52; these read MEVHDGLKSPDKAAKSRYDD and SKPRKISERKRA. Residues 1–52 are disordered; sequence MEVHDGLKSPDKAAKSRYDDDRIDQDSEDEAVRLVANPDPSKPRKISERKRA. The Helicase ATP-binding domain maps to 115–298; that stretch reads LFERAKQKNT…SYERATHELE (184 aa). Residue 128–135 coordinates ATP; it reads LDTGTGKT. The DEAH box motif lies at 242-245; the sequence is DEAH. Residues 439-607 form the Helicase C-terminal domain; that stretch reads KLIEILAECF…CLSLPKDRIM (169 aa). The region spanning 639–729 is the Dicer dsRNA-binding fold domain; the sequence is SLVVLAEFVA…KSTLAKVLPA (91 aa). Residues 888 to 1012 enclose the PAZ domain; the sequence is TTTDRVPYNF…LVLETLLISQ (125 aa). 2 RNase III domains span residues 1050-1190 and 1243-1406; these read IDIA…LTAQ and CSQI…VDTG. Mg(2+) contacts are provided by Glu-1283, Asp-1392, and Glu-1395. Residues 1440–1514 form the DRBM domain; the sequence is THITSIITTQ…AKQAVAIYED (75 aa). Positions 1452, 1485, 1526, and 1528 each coordinate Zn(2+).

The protein belongs to the helicase family. Dicer subfamily. Requires Mg(2+) as cofactor. Mn(2+) is required as a cofactor.

Dicer-like endonuclease which seems not to be involved in cleaving double-stranded RNA in the RNA interference (RNAi) pathway, contrary to its DCL2 counterpart. This is Dicer-like protein 1 (DCL1) from Pyricularia oryzae (strain 70-15 / ATCC MYA-4617 / FGSC 8958) (Rice blast fungus).